The primary structure comprises 939 residues: MEFKDTLNLPQTEFPMKGNLPNKEPEILSFWEKINLYQKLREDRKGKDKYILHDGPPYANGHIHIGHALNKILKDILVKYQSMKGKDAPFVPGWDCHGLPIEQQVEKELKEKKIKKEDLSKSEFRKLCREYALKFVNIQKEEFKRLGIIGNWEKPYLTMRPSYQAQEVLELGRVFNKGVAYRGKKPVYWCIYDKTAEAEAEIEYYDKKDPSIYVKFKMKDSDDTYLVIWTTTPWTLPANLGVMVHPEFDYVYFKTGKGTLIVAKELLENFKEKTGLNGEVIKQVKGKDLEFKEYYHPFIDRVSKVYLSEFVELGTGTGLVHMAPGHGQEDYIIGQRYGVDAFAPVDDEGRFIQEAPDWLKGIRVFDANDLIIEKLQEVDALIYKEVISHSYPHCWRCKNPVIFRATPQWFISMEAKVNENQTLREAALKEIERVKWIPYYGQNRIKSMVENRPDWCISRQRSWGVPITVFYCENCGEIVKDMEVFEHVANLIKNDEFGADIWFEKLVKELLPEGYKCKKCGGQEFKKEEDILDVWFDSGVSHAAVLKYGEWEELRWPADMYLEGSDQHRGWFQSSLLESVASYNRAPYDTVLTHGFTLDEKGRKMSKSAGNVVAPEKVIKEYGADILRLWVVTEDYTEDIKIGFNLIKRIAEDYRKIRNTFRYFLGNLYDFNPNQDYVPYENLLEIDRWMLSKLQNIIQIADKSYEEGKFHKIYHTIKNFVIVDLSAIYLDILKDRLYVYAPKSLERKSAQTVLWELLLSLNKILAPIISFTAEEVWQYVRKIDSNIKESIHLEIMPVVNEKFIDKNLEETYEKLLEVRDDILKAIEEARKQDLVRHPYEARVILKLPKEYKEIVEKRLDWIKFFFTVSQVELSDNPEGDVVINGESVKDSVIAVSKAKGEKCPRCWIYDESVGRNGQPVCDRCKIQLEIMNIKLEELA.

The short motif at 57–67 (PYANGHIHIGH) is the 'HIGH' region element. Glu-563 contributes to the L-isoleucyl-5'-AMP binding site. The short motif at 604 to 608 (KMSKS) is the 'KMSKS' region element. Lys-607 contributes to the ATP binding site. Positions 903, 906, 921, and 924 each coordinate Zn(2+).

It belongs to the class-I aminoacyl-tRNA synthetase family. IleS type 1 subfamily. Monomer. Zn(2+) serves as cofactor.

It localises to the cytoplasm. The enzyme catalyses tRNA(Ile) + L-isoleucine + ATP = L-isoleucyl-tRNA(Ile) + AMP + diphosphate. Functionally, catalyzes the attachment of isoleucine to tRNA(Ile). As IleRS can inadvertently accommodate and process structurally similar amino acids such as valine, to avoid such errors it has two additional distinct tRNA(Ile)-dependent editing activities. One activity is designated as 'pretransfer' editing and involves the hydrolysis of activated Val-AMP. The other activity is designated 'posttransfer' editing and involves deacylation of mischarged Val-tRNA(Ile). This chain is Isoleucine--tRNA ligase, found in Sulfurihydrogenibium sp. (strain YO3AOP1).